Here is a 111-residue protein sequence, read N- to C-terminus: Beta-microseminoprotein (111 aa).

The signal sequence occupies residues 1–20 (MKFLLGTLVVLATFVTLCNS). A Pyrrolidone carboxylic acid modification is found at Gln21. 5 disulfide bridges follow: Cys22–Cys67, Cys35–Cys59, Cys54–Cys90, Cys57–Cys66, and Cys81–Cys104.

It belongs to the beta-microseminoprotein family. Homodimer; Interacts with PI16. In terms of tissue distribution, corpora lutea, mostly in the luteal cells surrounding blood vessels.

Its subcellular location is the secreted. This Sus scrofa (Pig) protein is Beta-microseminoprotein (MSMB).